Reading from the N-terminus, the 472-residue chain is Argininosuccinate lyase (472 aa).

This sequence belongs to the lyase 1 family. Argininosuccinate lyase subfamily.

Its subcellular location is the cytoplasm. The catalysed reaction is 2-(N(omega)-L-arginino)succinate = fumarate + L-arginine. Its pathway is amino-acid biosynthesis; L-arginine biosynthesis; L-arginine from L-ornithine and carbamoyl phosphate: step 3/3. This Rhodococcus opacus (strain B4) protein is Argininosuccinate lyase.